The following is a 739-amino-acid chain: DNA ligase (739 aa).

34 to 38 (DADYD) provides a ligand contact to NAD(+). Positions 49–59 (ARFPHLKRPDS) are enriched in basic and acidic residues. Positions 49 to 70 (ARFPHLKRPDSPSEQVGARPGE) are disordered. Residues 83-84 (SL) and E117 each bind NAD(+). The active-site N6-AMP-lysine intermediate is the K119. NAD(+) contacts are provided by R140, E175, K291, and K315. Zn(2+)-binding residues include C420, C423, C438, and C444. One can recognise a BRCT domain in the interval 660-739 (ARDSPVAGKT…DGWLKLIEGL (80 aa)).

The protein belongs to the NAD-dependent DNA ligase family. LigA subfamily. The cofactor is Mg(2+). Requires Mn(2+) as cofactor.

It carries out the reaction NAD(+) + (deoxyribonucleotide)n-3'-hydroxyl + 5'-phospho-(deoxyribonucleotide)m = (deoxyribonucleotide)n+m + AMP + beta-nicotinamide D-nucleotide.. Functionally, DNA ligase that catalyzes the formation of phosphodiester linkages between 5'-phosphoryl and 3'-hydroxyl groups in double-stranded DNA using NAD as a coenzyme and as the energy source for the reaction. It is essential for DNA replication and repair of damaged DNA. In Ruegeria pomeroyi (strain ATCC 700808 / DSM 15171 / DSS-3) (Silicibacter pomeroyi), this protein is DNA ligase.